Here is a 502-residue protein sequence, read N- to C-terminus: D-erythritol 1-phosphate dehydrogenase (502 aa).

8 to 36 (DLFVIGGGINGAGVARDAAGRGLKVVLAE) serves as a coordination point for FAD.

Belongs to the FAD-dependent glycerol-3-phosphate dehydrogenase family. Requires FAD as cofactor.

It carries out the reaction D-erythritol 1-phosphate + NADP(+) = D-erythrulose 1-phosphate + NADPH + H(+). It functions in the pathway carbohydrate metabolism; erythritol degradation. In terms of biological role, catalyzes the oxydation of D-erythritol 1-phosphate to D-erythrulose 1-phosphate. This Brucella abortus (strain 2308) protein is D-erythritol 1-phosphate dehydrogenase.